Consider the following 729-residue polypeptide: Fatty acid oxidation complex subunit alpha (729 aa).

The tract at residues 1–189 is enoyl-CoA hydratase/isomerase; that stretch reads MLYKGDTLYL…KIGLVDGVVK (189 aa). Asp296 is a substrate binding site. Residues 311–729 are 3-hydroxyacyl-CoA dehydrogenase; it reads ETPKQAAVLG…ARLVGDLKTA (419 aa). Residues Met324, Asp343, 400 to 402, Lys407, and Ser429 contribute to the NAD(+) site; that span reads VVE. The For 3-hydroxyacyl-CoA dehydrogenase activity role is filled by His450. Asn453 lines the NAD(+) pocket. The substrate site is built by Asn500 and Tyr660.

This sequence in the N-terminal section; belongs to the enoyl-CoA hydratase/isomerase family. The protein in the C-terminal section; belongs to the 3-hydroxyacyl-CoA dehydrogenase family. Heterotetramer of two alpha chains (FadB) and two beta chains (FadA).

It carries out the reaction a (3S)-3-hydroxyacyl-CoA + NAD(+) = a 3-oxoacyl-CoA + NADH + H(+). The catalysed reaction is a (3S)-3-hydroxyacyl-CoA = a (2E)-enoyl-CoA + H2O. It catalyses the reaction a 4-saturated-(3S)-3-hydroxyacyl-CoA = a (3E)-enoyl-CoA + H2O. The enzyme catalyses (3S)-3-hydroxybutanoyl-CoA = (3R)-3-hydroxybutanoyl-CoA. It carries out the reaction a (3Z)-enoyl-CoA = a 4-saturated (2E)-enoyl-CoA. The catalysed reaction is a (3E)-enoyl-CoA = a 4-saturated (2E)-enoyl-CoA. It participates in lipid metabolism; fatty acid beta-oxidation. In terms of biological role, involved in the aerobic and anaerobic degradation of long-chain fatty acids via beta-oxidation cycle. Catalyzes the formation of 3-oxoacyl-CoA from enoyl-CoA via L-3-hydroxyacyl-CoA. It can also use D-3-hydroxyacyl-CoA and cis-3-enoyl-CoA as substrate. This chain is Fatty acid oxidation complex subunit alpha, found in Escherichia coli (strain SE11).